The sequence spans 295 residues: Tyrosine recombinase XerD (295 aa).

Residues 1–85 (MDTIIEEYLK…TIRSFHQFAL (85 aa)) form the Core-binding (CB) domain. Residues 106–289 (KLPDVLEINE…SKSQIRKMYN (184 aa)) enclose the Tyr recombinase domain. Residues R146, K170, H241, R244, and H267 contribute to the active site. The active-site O-(3'-phospho-DNA)-tyrosine intermediate is the Y276.

Belongs to the 'phage' integrase family. XerD subfamily. Forms a cyclic heterotetrameric complex composed of two molecules of XerC and two molecules of XerD.

It localises to the cytoplasm. In terms of biological role, site-specific tyrosine recombinase, which acts by catalyzing the cutting and rejoining of the recombining DNA molecules. The XerC-XerD complex is essential to convert dimers of the bacterial chromosome into monomers to permit their segregation at cell division. It also contributes to the segregational stability of plasmids. This Staphylococcus saprophyticus subsp. saprophyticus (strain ATCC 15305 / DSM 20229 / NCIMB 8711 / NCTC 7292 / S-41) protein is Tyrosine recombinase XerD.